The primary structure comprises 248 residues: Probable aquaporin TIP2-1 (248 aa).

A run of 2 helical transmembrane segments spans residues 20 to 40 (AYVAEFIATLLFVFAGVGSAI) and 54 to 74 (AGLVAIAIAHALALFVGVSVA). Positions 83 to 85 (NPA) match the NPA 1 motif. 3 helical membrane-spanning segments follow: residues 97–119 (TILTGLFYWIAQLLGASIACLLL), 141–161 (GVVMEIVITFALVYTVYATAA), and 168–188 (LGTIAPIAIGFIVGANILAAG). Residues 196 to 198 (NPA) carry the NPA 2 motif. The helical transmembrane segment at 217–237 (WVGPLIGGGLAGLVYGDVFIG) threads the bilayer.

It belongs to the MIP/aquaporin (TC 1.A.8) family. TIP (TC 1.A.8.10) subfamily. As to expression, expressed in roots and anthers.

It localises to the vacuole membrane. In terms of biological role, aquaporins facilitate the transport of water and small neutral solutes across cell membranes. May be involved in transport from the vacuolar compartment to the cytoplasm. In Oryza sativa subsp. japonica (Rice), this protein is Probable aquaporin TIP2-1 (TIP2-1).